The following is a 182-amino-acid chain: Translation initiation factor IF-3, chloroplastic (182 aa).

It belongs to the IF-3 family. Monomer.

It is found in the plastid. It localises to the chloroplast. Its function is as follows. IF-3 binds to the 30S ribosomal subunit and shifts the equilibrium between 70S ribosomes and their 50S and 30S subunits in favor of the free subunits, thus enhancing the availability of 30S subunits on which protein synthesis initiation begins. This chain is Translation initiation factor IF-3, chloroplastic, found in Porphyra purpurea (Red seaweed).